We begin with the raw amino-acid sequence, 152 residues long: Xanthine-guanine phosphoribosyltransferase (152 aa).

Residues 37 to 38 and 88 to 96 each bind 5-phospho-alpha-D-ribose 1-diphosphate; these read RG and DDLVDTGGT. Asp-89 is a binding site for Mg(2+). Guanine contacts are provided by Asp-92 and Ile-135. Asp-92 and Ile-135 together coordinate xanthine. Residues 92–96 and 134–135 each bind GMP; these read DTGGT and WI.

Belongs to the purine/pyrimidine phosphoribosyltransferase family. XGPT subfamily. In terms of assembly, homotetramer. Requires Mg(2+) as cofactor.

The protein resides in the cell inner membrane. It carries out the reaction GMP + diphosphate = guanine + 5-phospho-alpha-D-ribose 1-diphosphate. It catalyses the reaction XMP + diphosphate = xanthine + 5-phospho-alpha-D-ribose 1-diphosphate. The enzyme catalyses IMP + diphosphate = hypoxanthine + 5-phospho-alpha-D-ribose 1-diphosphate. It participates in purine metabolism; GMP biosynthesis via salvage pathway; GMP from guanine: step 1/1. The protein operates within purine metabolism; XMP biosynthesis via salvage pathway; XMP from xanthine: step 1/1. In terms of biological role, purine salvage pathway enzyme that catalyzes the transfer of the ribosyl-5-phosphate group from 5-phospho-alpha-D-ribose 1-diphosphate (PRPP) to the N9 position of the 6-oxopurines guanine and xanthine to form the corresponding ribonucleotides GMP (guanosine 5'-monophosphate) and XMP (xanthosine 5'-monophosphate), with the release of PPi. To a lesser extent, also acts on hypoxanthine. The protein is Xanthine-guanine phosphoribosyltransferase of Yersinia enterocolitica serotype O:8 / biotype 1B (strain NCTC 13174 / 8081).